The sequence spans 687 residues: E3 ubiquitin-protein ligase RNF19B (687 aa).

The segment at M1–C294 is required for ubiquitin ligase activity and for protection against staurosporin-induced cell death. Residues R53–G88 form a disordered region. Residues P60–S85 are compositionally biased toward pro residues. The segment at S91 to G313 is TRIAD supradomain. Residues C95, C98, C118, C121, C182, C187, C204, C209, C214, C217, H222, C227, C263, and C266 each contribute to the Zn(2+) site. The RING-type 1 zinc finger occupies C95–E144. The IBR-type zinc-finger motif lies at T161 to C227. The RING-type 2; atypical zinc finger occupies C263 to C294. C278 is a catalytic residue. 6 residues coordinate Zn(2+): C283, C286, C291, C294, H302, and C309. A run of 2 helical transmembrane segments spans residues L330–I350 and V391–V411. Residues S618–R662 are disordered. Residues Q629–Y641 show a composition bias toward acidic residues.

It belongs to the RBR family. RNF19 subfamily. Interacts with UBE2L3, UBE2L6 and UCKL1.

It localises to the cytoplasmic granule membrane. Its subcellular location is the endoplasmic reticulum membrane. It catalyses the reaction [E2 ubiquitin-conjugating enzyme]-S-ubiquitinyl-L-cysteine + [acceptor protein]-L-lysine = [E2 ubiquitin-conjugating enzyme]-L-cysteine + [acceptor protein]-N(6)-ubiquitinyl-L-lysine.. Its pathway is protein modification; protein ubiquitination. E3 ubiquitin-protein ligase which accepts ubiquitin from E2 ubiquitin-conjugating enzymes UBE2L3 and UBE2L6 in the form of a thioester and then directly transfers the ubiquitin to targeted substrates, such as UCKL1. Involved in the cytolytic activity of natural killer cells and cytotoxic T-cells. Protects against staurosporin-induced cell death. This Xenopus laevis (African clawed frog) protein is E3 ubiquitin-protein ligase RNF19B (rnf19b).